A 193-amino-acid chain; its full sequence is Ion-translocating oxidoreductase complex subunit A (193 aa).

6 helical membrane-spanning segments follow: residues 4–24, 39–59, 71–91, 102–122, 134–154, and 167–187; these read FFFI…KFLG, IGMG…SWMV, FLRI…IEVV, ALGI…VALL, LLYG…FAGM, and FAGA…FMGF.

This sequence belongs to the NqrDE/RnfAE family. As to quaternary structure, the complex is composed of six subunits: RnfA, RnfB, RnfC, RnfD, RnfE and RnfG.

The protein localises to the cellular chromatophore membrane. Its function is as follows. Part of a membrane-bound complex that couples electron transfer with translocation of ions across the membrane. The protein is Ion-translocating oxidoreductase complex subunit A of Cereibacter sphaeroides (strain ATCC 17029 / ATH 2.4.9) (Rhodobacter sphaeroides).